A 141-amino-acid polypeptide reads, in one-letter code: Putative pre-16S rRNA nuclease (141 aa).

It belongs to the YqgF nuclease family.

The protein resides in the cytoplasm. In terms of biological role, could be a nuclease involved in processing of the 5'-end of pre-16S rRNA. The protein is Putative pre-16S rRNA nuclease of Pseudomonas putida (strain ATCC 47054 / DSM 6125 / CFBP 8728 / NCIMB 11950 / KT2440).